The primary structure comprises 491 residues: Glutamate--tRNA ligase (491 aa).

The short motif at 13–23 is the 'HIGH' region element; sequence PSPTGFLHIGN. Zn(2+) is bound by residues cysteine 110, cysteine 112, cysteine 137, and histidine 139. Positions 254 to 258 match the 'KMSKS' region motif; sequence KLSKR. Lysine 257 provides a ligand contact to ATP.

It belongs to the class-I aminoacyl-tRNA synthetase family. Glutamate--tRNA ligase type 1 subfamily. In terms of assembly, monomer. It depends on Zn(2+) as a cofactor.

It is found in the cytoplasm. The enzyme catalyses tRNA(Glu) + L-glutamate + ATP = L-glutamyl-tRNA(Glu) + AMP + diphosphate. In terms of biological role, catalyzes the attachment of glutamate to tRNA(Glu) in a two-step reaction: glutamate is first activated by ATP to form Glu-AMP and then transferred to the acceptor end of tRNA(Glu). The sequence is that of Glutamate--tRNA ligase from Listeria monocytogenes serotype 4b (strain F2365).